The sequence spans 309 residues: Short-chain dehydrogenase/reductase ARMGADRAFT_1048226 (309 aa).

Positions 64, 86, 113, and 145 each coordinate NADP(+). S167 serves as the catalytic Proton donor. NADP(+)-binding residues include Y196 and K200. Y196 (proton acceptor) is an active-site residue. Residue K200 is the Lowers pKa of active site Tyr of the active site.

Belongs to the short-chain dehydrogenases/reductases (SDR) family.

The protein operates within secondary metabolite biosynthesis. Functionally, short-chain dehydrogenase/reductase, part of the gene cluster that mediates the biosynthesis of melleolides, a range of antifungal and phytotoxic polyketide derivatives composed of an orsellinic acid (OA) moiety esterified to various sesquiterpene alcohols. The first step in melleolides biosynthesis is performed by the delta(6)-protoilludene synthase PRO1 which catalyzes the cyclization of farnesyl diphosphate to protoilludene. The orsellinic acid synthase armB produces OA by condensing acetyl-CoA with 3 malonyl-CoA units in a three-round chain elongation reaction folowed by a C2-C7 ring closure. ArmB further catalyzes the trans-esterification of OA to the various sesquiterpene alcohols resulting from the hydroxylation of protoilludene. The melleolides cluster also includes 5 cytochrome P450 monooxygenases, 4 NAD(+)-dependent oxidoreductases, one flavin-dependent oxidoreductase, and one O-methyltransferase. The cytochrome P450 monooxygenases may be involved in protoilludene hydroxylation to elaborate melleolides with multiple alcohol groups, such as melleolide D, which carries alcohol functionalities at C-4, C-5, C-10, and C-13. The role of the NAD(+)-dependent enzymes remains unknown. Numerous melleolides, including arnamial, show 5'-O-methylation of the aromatic moiety which may be catalyzed by the methyltransferase encoded in the cluster. The flavin-dependent oxidoreductase might represent the dehydrogenase yielding the aldehyde in position 1 of arnamial and other melleolides. Finally, several halogenase localized outside of the cluster, are able to catalyze the transfer of a single chlorine atom to the melleolide backbone, resulting in a 6'-chloromelleolide product. In Armillaria gallica (Bulbous honey fungus), this protein is Short-chain dehydrogenase/reductase ARMGADRAFT_1048226.